Here is a 910-residue protein sequence, read N- to C-terminus: DNA mismatch repair protein MutS (910 aa).

Residues 1–11 (MEAKVEEKEPE) show a composition bias toward basic and acidic residues. Positions 1–21 (MEAKVEEKEPEPVENAGPDAP) are disordered. 658–665 (GPNMGGKS) provides a ligand contact to ATP.

This sequence belongs to the DNA mismatch repair MutS family.

This protein is involved in the repair of mismatches in DNA. It is possible that it carries out the mismatch recognition step. This protein has a weak ATPase activity. The protein is DNA mismatch repair protein MutS of Brucella suis (strain ATCC 23445 / NCTC 10510).